Here is a 445-residue protein sequence, read N- to C-terminus: Dolichyl-diphosphooligosaccharide--protein glycosyltransferase 48 kDa subunit (445 aa).

The signal sequence occupies residues 1-32; sequence MRRRRKMEAGAAARAWSLLWLLLPLLGPVCAS. Residues 33 to 415 lie on the Lumenal side of the membrane; the sequence is GPRTLVLLDN…QYERFIPSAY (383 aa). A helical transmembrane segment spans residues 416–436; that stretch reads PYYASAFSMMLGLFIFSTVFL. At 437 to 445 the chain is on the cytoplasmic side; it reads HMKEKEKSD.

The protein belongs to the DDOST 48 kDa subunit family. In terms of assembly, component of the oligosaccharyltransferase (OST) complex. OST exists in two different complex forms which contain common core subunits RPN1, RPN2, OST48, OST4, DAD1 and TMEM258, either STT3A or STT3B as catalytic subunits, and form-specific accessory subunits. STT3A complex assembly occurs through the formation of 3 subcomplexes. Subcomplex 1 contains RPN1 and TMEM258, subcomplex 2 contains the STT3A-specific subunits STT3A, DC2/OSTC, and KCP2 as well as the core subunit OST4, and subcomplex 3 contains RPN2, DAD1, and OST48. The STT3A complex can form stable complexes with the Sec61 complex or with both the Sec61 and TRAP complexes. Interacts with SMIM22.

The protein localises to the endoplasmic reticulum. The protein resides in the endoplasmic reticulum membrane. The protein operates within protein modification; protein glycosylation. Subunit of the oligosaccharyl transferase (OST) complex that catalyzes the initial transfer of a defined glycan (Glc(3)Man(9)GlcNAc(2) in eukaryotes) from the lipid carrier dolichol-pyrophosphate to an asparagine residue within an Asn-X-Ser/Thr consensus motif in nascent polypeptide chains, the first step in protein N-glycosylation. N-glycosylation occurs cotranslationally and the complex associates with the Sec61 complex at the channel-forming translocon complex that mediates protein translocation across the endoplasmic reticulum (ER). All subunits are required for a maximal enzyme activity. Required for the assembly of both SST3A- and SS3B-containing OST complexes. The protein is Dolichyl-diphosphooligosaccharide--protein glycosyltransferase 48 kDa subunit of Canis lupus familiaris (Dog).